The sequence spans 101 residues: DNA-binding protein Fis (101 aa).

The H-T-H motif DNA-binding region spans 77 to 96 (QTRAANMLGINRGTLRKKLK).

This sequence belongs to the transcriptional regulatory Fis family. In terms of assembly, homodimer.

Its function is as follows. Activates ribosomal RNA transcription. Plays a direct role in upstream activation of rRNA promoters. This is DNA-binding protein Fis from Shewanella baltica (strain OS223).